A 367-amino-acid polypeptide reads, in one-letter code: Glutamate 5-kinase (367 aa).

Lysine 10 lines the ATP pocket. Substrate-binding residues include serine 50, aspartate 137, and asparagine 149. Residues 169–170 and 211–217 contribute to the ATP site; these read TD and TGGMGTK. One can recognise a PUA domain in the interval 275-353; it reads AGEITVDDGA…QEISEILGYE (79 aa).

Belongs to the glutamate 5-kinase family.

The protein resides in the cytoplasm. It catalyses the reaction L-glutamate + ATP = L-glutamyl 5-phosphate + ADP. It functions in the pathway amino-acid biosynthesis; L-proline biosynthesis; L-glutamate 5-semialdehyde from L-glutamate: step 1/2. Its function is as follows. Catalyzes the transfer of a phosphate group to glutamate to form L-glutamate 5-phosphate. This is Glutamate 5-kinase from Serratia proteamaculans (strain 568).